The primary structure comprises 85 residues: Sec-independent protein translocase protein TatA (85 aa).

Residues 1-21 (MGSFSIWHWLIVLLIIMMVFG) form a helical membrane-spanning segment. Positions 39–51 (FKEGMREGSEDKP) are enriched in basic and acidic residues. Residues 39–85 (FKEGMREGSEDKPAGSQQGQQAAGQPPRELHDSTTIDVEARDKSKQG) are disordered. Residues 52 to 65 (AGSQQGQQAAGQPP) are compositionally biased toward low complexity. The span at 66 to 85 (RELHDSTTIDVEARDKSKQG) shows a compositional bias: basic and acidic residues.

The protein belongs to the TatA/E family. The Tat system comprises two distinct complexes: a TatABC complex, containing multiple copies of TatA, TatB and TatC subunits, and a separate TatA complex, containing only TatA subunits. Substrates initially bind to the TatABC complex, which probably triggers association of the separate TatA complex to form the active translocon.

Its subcellular location is the cell inner membrane. In terms of biological role, part of the twin-arginine translocation (Tat) system that transports large folded proteins containing a characteristic twin-arginine motif in their signal peptide across membranes. TatA could form the protein-conducting channel of the Tat system. The sequence is that of Sec-independent protein translocase protein TatA from Ralstonia nicotianae (strain ATCC BAA-1114 / GMI1000) (Ralstonia solanacearum).